Consider the following 294-residue polypeptide: Cytidine deaminase (294 aa).

CMP/dCMP-type deaminase domains are found at residues 48 to 168 (DDDA…FGPK) and 187 to 294 (ALTD…RITF). Residue 89–91 (NME) coordinates substrate. Position 102 (histidine 102) interacts with Zn(2+). Catalysis depends on glutamate 104, which acts as the Proton donor. Residues cysteine 129 and cysteine 132 each contribute to the Zn(2+) site.

The protein belongs to the cytidine and deoxycytidylate deaminase family. Homodimer. Zn(2+) serves as cofactor.

The enzyme catalyses cytidine + H2O + H(+) = uridine + NH4(+). The catalysed reaction is 2'-deoxycytidine + H2O + H(+) = 2'-deoxyuridine + NH4(+). Functionally, this enzyme scavenges exogenous and endogenous cytidine and 2'-deoxycytidine for UMP synthesis. This chain is Cytidine deaminase, found in Serratia proteamaculans (strain 568).